Reading from the N-terminus, the 417-residue chain is Probable uracil permease (417 aa).

Residues 1-13 (MTNQNPPVLLEQN) are Cytoplasmic-facing. A helical membrane pass occupies residues 14 to 37 (HAKQAFVGLQMLFVAFGALVLVPL). Residues 38–41 (ITGL) lie on the Periplasmic side of the membrane. A helical transmembrane segment spans residues 42 to 61 (NANTALLTAGIGTLLFQLCT). The Cytoplasmic segment spans residues 62–64 (GRQ). The chain crosses the membrane as a discontinuously helical span at residues 65–81 (VPIFLASSFAFIAPIQY). A uracil-binding site is contributed by Phe73. Residues 83–90 (VTTWGIAT) lie on the Periplasmic side of the membrane. Residues 91-111 (TMGGLVFTGLVYFALSTLVKI) traverse the membrane as a helical segment. Residues 112–123 (KGAGALQKVFPP) lie on the Cytoplasmic side of the membrane. Residues 124-145 (VVVGPVIIIIGMGLAPVAVDMA) traverse the membrane as a helical segment. Over 146 to 154 (LGKNSTYQY) the chain is Periplasmic. The helical transmembrane segment at 155-170 (NDAVFVSMATLLTTLG) threads the bilayer. Residues 171 to 177 (VAVFAKG) lie on the Cytoplasmic side of the membrane. A helical transmembrane segment spans residues 178–198 (MMKLIPIMFGIVVGYILCLFL). The Periplasmic portion of the chain corresponds to 199-223 (GLINFQPVIDAPWFSVPEITTPEFK). A helical membrane pass occupies residues 224–247 (LEAILYLLPIAIAPAVEHVGGIMA). A uracil-binding site is contributed by Glu240. The Cytoplasmic portion of the chain corresponds to 248 to 260 (ISSVTGKDFLQKP). The chain crosses the membrane as a helical span at residues 261-280 (GLHRTLLGDGIATSAASFLG). A discontinuously helical transmembrane segment spans residues 281–297 (GPPNTTYAEVTGAVMLT). Glu289 serves as a coordination point for uracil. Residues 298–300 (RNF) are Cytoplasmic-facing. The helical transmembrane segment at 301–318 (NPKIMTWAAVWAIAISFC) threads the bilayer. Residues 319–331 (GKVGAFLSTIPTI) are Periplasmic-facing. The chain crosses the membrane as a helical span at residues 332 to 353 (VMGGIMMLVFGSIAVVGMSTLI). Over 354-364 (RGKVDVTEARN) the chain is Cytoplasmic. The segment at residues 365–400 (LCIISVVMTFGIGGMFVNFGEVSLKGISLCAVVAIL) is an intramembrane region (discontinuously helical). The Cytoplasmic portion of the chain corresponds to 401–416 (LNLILPKAKNTPIEEN).

Belongs to the nucleobase:cation symporter-2 (NCS2) (TC 2.A.40) family.

It is found in the cell inner membrane. It carries out the reaction uracil(in) + H(+)(in) = uracil(out) + H(+)(out). Its function is as follows. Transport of uracil in the cell. This Pasteurella multocida (strain Pm70) protein is Probable uracil permease (uraA).